The following is a 214-amino-acid chain: Probable transaldolase (214 aa).

Residue K83 is the Schiff-base intermediate with substrate of the active site.

Belongs to the transaldolase family. Type 3B subfamily.

The protein localises to the cytoplasm. It catalyses the reaction D-sedoheptulose 7-phosphate + D-glyceraldehyde 3-phosphate = D-erythrose 4-phosphate + beta-D-fructose 6-phosphate. Its pathway is carbohydrate degradation; pentose phosphate pathway; D-glyceraldehyde 3-phosphate and beta-D-fructose 6-phosphate from D-ribose 5-phosphate and D-xylulose 5-phosphate (non-oxidative stage): step 2/3. Transaldolase is important for the balance of metabolites in the pentose-phosphate pathway. This chain is Probable transaldolase, found in Alkaliphilus metalliredigens (strain QYMF).